The sequence spans 772 residues: Probable serine/threonine-protein kinase HAL5-like (772 aa).

Disordered regions lie at residues 1–102 (MASS…TRHV), 115–165 (RAGT…EPNN), 185–241 (IDTQ…RSNT), and 344–396 (NADE…SANV). Positions 9–19 (SEPRISRESSL) are enriched in basic and acidic residues. Low complexity-rich tracts occupy residues 20 to 33 (KRSL…KGLF) and 41 to 59 (NTGP…ISTP). Residues 66–86 (TKDKQDRLKNLAANKEKELQT) show a composition bias toward basic and acidic residues. Positions 146 to 158 (RQSSSNRSSSFSN) are enriched in low complexity. A compositionally biased stretch (basic residues) spans 202–212 (RRSRSTQRKRL). Positions 454–758 (GKSIGIIGQG…VDSLLKSSWM (305 aa)) constitute a Protein kinase domain. Residues 460-468 (IGQGAYGVV) and K498 each bind ATP. Residue D609 is the Proton acceptor of the active site.

The protein belongs to the protein kinase superfamily. CAMK Ser/Thr protein kinase family. NPR/HAL subfamily. HAL5 sub-subfamily.

It catalyses the reaction L-seryl-[protein] + ATP = O-phospho-L-seryl-[protein] + ADP + H(+). It carries out the reaction L-threonyl-[protein] + ATP = O-phospho-L-threonyl-[protein] + ADP + H(+). The sequence is that of Probable serine/threonine-protein kinase HAL5-like from Kluyveromyces lactis (strain ATCC 8585 / CBS 2359 / DSM 70799 / NBRC 1267 / NRRL Y-1140 / WM37) (Yeast).